Here is a 96-residue protein sequence, read N- to C-terminus: Integration host factor subunit beta (96 aa).

Belongs to the bacterial histone-like protein family. As to quaternary structure, heterodimer of an alpha and a beta chain.

Its function is as follows. This protein is one of the two subunits of integration host factor, a specific DNA-binding protein that functions in genetic recombination as well as in transcriptional and translational control. In Dichelobacter nodosus (strain VCS1703A), this protein is Integration host factor subunit beta.